Reading from the N-terminus, the 564-residue chain is O-fucosyltransferase 6 (564 aa).

A helical; Signal-anchor for type II membrane protein membrane pass occupies residues Leu-17–Ile-37. 2 N-linked (GlcNAc...) asparagine glycosylation sites follow: Asn-95 and Asn-139. His-277–Arg-279 is a substrate binding site. Asn-449 carries N-linked (GlcNAc...) asparagine glycosylation. Basic and acidic residues predominate over residues Met-501–Lys-512. A disordered region spans residues Met-501 to Thr-542. A compositionally biased stretch (acidic residues) spans Glu-513–Asp-532. An N-linked (GlcNAc...) asparagine glycan is attached at Asn-540.

This sequence belongs to the glycosyltransferase GT106 family.

Its subcellular location is the membrane. The protein operates within glycan metabolism. This chain is O-fucosyltransferase 6, found in Arabidopsis thaliana (Mouse-ear cress).